Reading from the N-terminus, the 156-residue chain is Succinate dehydrogenase assembly factor 2-B, mitochondrial (156 aa).

The transit peptide at 1 to 24 directs the protein to the mitochondrion; sequence MLRQLIVSTVGRRMPLQMISQSRL.

Belongs to the SDHAF2 family. As to quaternary structure, interacts with the flavoprotein subunit within the SDH catalytic dimer.

The protein localises to the mitochondrion matrix. In terms of biological role, plays an essential role in the assembly of succinate dehydrogenase (SDH), an enzyme complex (also referred to as respiratory complex II) that is a component of both the tricarboxylic acid (TCA) cycle and the mitochondrial electron transport chain, and which couples the oxidation of succinate to fumarate with the reduction of ubiquinone (coenzyme Q) to ubiquinol. Required for flavinylation (covalent attachment of FAD) of the flavoprotein subunit of the SDH catalytic dimer. This Drosophila erecta (Fruit fly) protein is Succinate dehydrogenase assembly factor 2-B, mitochondrial.